Reading from the N-terminus, the 650-residue chain is Exonuclease 3'-5' domain-containing protein 2 (650 aa).

The Mitochondrial intermembrane segment spans residues 1-6 (MSRQNL). Residues 7-29 (VALTVTTLLGVAMGGFVLWKGIQ) traverse the membrane as a helical segment. Residues 30 to 650 (RRWSKTSRVM…YGDDLPIKLS (621 aa)) lie on the Cytoplasmic side of the membrane. The disordered stretch occupies residues 34 to 89 (KTSRVMQQQPQQPQQPQQPQPQPQPQPQPQPEHPQPQQQVPGGREWPPPEDDQLPF). Positions 49 to 67 (PQQPQPQPQPQPQPQPEHP) are enriched in pro residues. A divalent metal cation is bound by residues D137, E139, and D275. The 3'-5' exonuclease domain occupies 184 to 276 (ILADGAILKV…DQVTYAARDA (93 aa)). Positions 340–373 (SQLKPRNRKAKTDRMVPGNNQGRDPRKHKRKPLG) are disordered.

It belongs to the EXD2 family. As to quaternary structure, homodimer. Interacts with RBBP8, MRE11 and BRCA1. Requires Mg(2+) as cofactor. Mn(2+) serves as cofactor.

The protein localises to the mitochondrion outer membrane. It is found in the mitochondrion matrix. The protein resides in the nucleus. It localises to the chromosome. The enzyme catalyses Exonucleolytic cleavage in the 3'- to 5'-direction to yield nucleoside 5'-phosphates.. Its function is as follows. Exonuclease that has both 3'-5' exoribonuclease and exodeoxyribonuclease activities, depending on the divalent metal cation used as cofactor. In presence of Mg(2+), only shows 3'-5' exoribonuclease activity, while it shows both exoribonuclease and exodeoxyribonuclease activities in presence of Mn(2+). Acts as an exoribonuclease in mitochondrion, possibly by regulating ATP production and mitochondrial translation. Also involved in the response to DNA damage. Acts as 3'-5' exodeoxyribonuclease for double-strand breaks resection and efficient homologous recombination. Plays a key role in controlling the initial steps of chromosomal break repair, it is recruited to chromatin in a damage-dependent manner and functionally interacts with the MRN complex to accelerate resection through its 3'-5' exonuclease activity, which efficiently processes double-stranded DNA substrates containing nicks. Also involved in response to replicative stress: recruited to stalled forks and is required to stabilize and restart stalled replication forks by restraining excessive fork regression, thereby suppressing their degradation. This is Exonuclease 3'-5' domain-containing protein 2 from Mus musculus (Mouse).